Here is a 409-residue protein sequence, read N- to C-terminus: 5-aminolevulinate synthase (409 aa).

Residues Arg21, Ser137, and Lys156 each contribute to the succinyl-CoA site. Residues Ser189, His217, and Thr245 each coordinate pyridoxal 5'-phosphate. Residue Lys248 is part of the active site. Residue Lys248 is modified to N6-(pyridoxal phosphate)lysine. The pyridoxal 5'-phosphate site is built by Ser277 and Thr278. Thr365 serves as a coordination point for succinyl-CoA.

It belongs to the class-II pyridoxal-phosphate-dependent aminotransferase family. In terms of assembly, homodimer. Pyridoxal 5'-phosphate is required as a cofactor.

The catalysed reaction is succinyl-CoA + glycine + H(+) = 5-aminolevulinate + CO2 + CoA. It functions in the pathway porphyrin-containing compound metabolism; protoporphyrin-IX biosynthesis; 5-aminolevulinate from glycine: step 1/1. This Rhodobacter capsulatus (strain ATCC BAA-309 / NBRC 16581 / SB1003) protein is 5-aminolevulinate synthase (hemA).